The following is a 382-amino-acid chain: Galactokinase (382 aa).

34–37 contributes to the substrate binding site; it reads EHTD. Residue 124–130 coordinates ATP; the sequence is GAGLSSS. Mg(2+) contacts are provided by serine 130 and glutamate 162. Residue aspartate 174 is the Proton acceptor of the active site. Tyrosine 223 is a binding site for substrate.

This sequence belongs to the GHMP kinase family. GalK subfamily.

It is found in the cytoplasm. It carries out the reaction alpha-D-galactose + ATP = alpha-D-galactose 1-phosphate + ADP + H(+). It functions in the pathway carbohydrate metabolism; galactose metabolism. In terms of biological role, catalyzes the transfer of the gamma-phosphate of ATP to D-galactose to form alpha-D-galactose-1-phosphate (Gal-1-P). The sequence is that of Galactokinase from Salmonella arizonae (strain ATCC BAA-731 / CDC346-86 / RSK2980).